The sequence spans 190 residues: MDRKEQKSIIEGLLFVSGDEGIYPEQIAKVLEIEMNEVMNILEEMQQECEGANRGLQIVQYAKVYRFATKKEHASYYQKLIDTPTAASLSQAALETLAIVAYRQPITRTEMEEIRGVKTDKALQTLVSHLLIKEMGRAEGPGRPILYGTTKEFLDTFGLKTLDDLPPLSEENEQMNEADLFFGSLQEISK.

Belongs to the ScpB family. As to quaternary structure, homodimer. Homodimerization may be required to stabilize the binding of ScpA to the Smc head domains. Component of a cohesin-like complex composed of ScpA, ScpB and the Smc homodimer, in which ScpA and ScpB bind to the head domain of Smc. The presence of the three proteins is required for the association of the complex with DNA.

The protein localises to the cytoplasm. Its function is as follows. Participates in chromosomal partition during cell division. May act via the formation of a condensin-like complex containing Smc and ScpA that pull DNA away from mid-cell into both cell halves. The chain is Segregation and condensation protein B from Bacillus cereus (strain G9842).